The following is a 381-amino-acid chain: Chaperone protein DnaJ (381 aa).

A J domain is found at 5 to 70 (DYYEVLGIER…EKRSAYDQFG (66 aa)). The CR-type zinc finger occupies 137–215 (GTTVDIRVPR…CHGEGRVRET (79 aa)). Positions 150, 153, 167, 170, 189, 192, 203, and 206 each coordinate Zn(2+). CXXCXGXG motif repeat units follow at residues 150–157 (CEHCDGDG), 167–174 (CPTCHGQG), 189–196 (CPTCHGAG), and 203–210 (CRKCHGEG).

It belongs to the DnaJ family. As to quaternary structure, homodimer. The cofactor is Zn(2+).

Its subcellular location is the cytoplasm. In terms of biological role, participates actively in the response to hyperosmotic and heat shock by preventing the aggregation of stress-denatured proteins and by disaggregating proteins, also in an autonomous, DnaK-independent fashion. Unfolded proteins bind initially to DnaJ; upon interaction with the DnaJ-bound protein, DnaK hydrolyzes its bound ATP, resulting in the formation of a stable complex. GrpE releases ADP from DnaK; ATP binding to DnaK triggers the release of the substrate protein, thus completing the reaction cycle. Several rounds of ATP-dependent interactions between DnaJ, DnaK and GrpE are required for fully efficient folding. Also involved, together with DnaK and GrpE, in the DNA replication of plasmids through activation of initiation proteins. In Chromohalobacter salexigens (strain ATCC BAA-138 / DSM 3043 / CIP 106854 / NCIMB 13768 / 1H11), this protein is Chaperone protein DnaJ.